The chain runs to 1449 residues: MEEYELREIALQEGGSNLDINTPPNYDNPVGDGSSPPDSPDIQKSENQFKNVERELEIDSKQYLAGHDAENNHDENDEDFKLRRYFENSQRMALGNGQKPKKMGVSIRNLTVVGRGADQSVIADMSTPFISFFNLFKPSTWKEKGSTFDILHDITLFNRDGGMLLVLGRPGSGCSTLLRLISNQRGSYVEVKGDIKYGGIPAKEWKRYQGESIYTPEEDTHHPTLTVRQTLDFALKCKTIHNRLPDEKKRTYRQKIFDLLLGMFGIVHQADTIVGNEFIRGLSGGERKRLTITEAMVSSASITCYDCSTRGLDAASALDYAKSIRIMSDTLDKTTIASFYQASDSIYNLFDNVAIIEKGRLIYFGPGNKAKQYFIDLGFDCEPRKSTPDFLTGVTNPQERIIRQGFEGRVPETSADFEAAWRNSSMYRDMLEEQKEYERKIEIEQPAVDFIQEVKAEKSRTTPKRSIYTTSYITQVKALIVRNSQIIWGDKFSLISRYLSVFTQSFVYGSIFFQMEKTIPGLFTRGGAIFSAILFNAFLSEAELPLTMYGRRILQKQRSYAMYRPSALHIAQIVTDIPLTMIQVFLFSIVVYFMFGLQYNAGKFFIFCFTLVGATLATTNLFRVFGNFSPSLYISQNVMNVILIFMITYCGYTIPKPKMHPWFAWFYWANPFSYAFKALMANEFGDLSFDCHDTAIPFDPKNPTRYDNDYRVCASPGAVEGILSVEGKDYLDQYLHFRSDDLTQNVFITYLWWVLFTAMNMFAMEYFDWTGGGYSHKVYKKGKAPKMNDAEEEKKQNQIVANATSKMKDTLKMRGGIFTWQNINYTVPVKGGKRLLLDNVEGWIKPGQMTALMGSSGAGKTTLLDVLAKRKTMGEVQGKCFLNGKPLEIDFERITGYVEQMDVHNPGLTVREALRFSAKLRQEPSVSLEEKFDYVEHVLEMMEMKHLGDALIGTLETGVGISVEERKRLTIGVELVAKPHILFLDEPTSGLDAQSSYNIVKFIRKLADAGMPLVCTIHQPSSVLFEHFDRILLLAKGGKTVYFGDIGERSKTLTSYFERYGVRPCTESENPAEYILEATGAGVHGKSDVNWPETWKQSPELQEIERELAALEAAGPSSTEDHGKPREFATSVWYQTIEVYKRLNLIWWRDPFYTYGSFIQSALAGLIIGFTFWSLQGSSSDMNQRVFFIFEALILGILLIFVVLPQFIMQKEYFKRDFASKFYSWFPFAISIVVVELPFITVSGTIFFFCSFWTAGLNTEYNDINFYFWFIFILFLYFCVSFGQAVAAICFNMFLAHTLIPLLIVFLFLFCGVMVIPSSIPTFWRGWVYHLNPCRYFMEGIVTNVLKHTDVKCTSEDFTHFTNPEAVNGVTCKQYFPISEPLTGYVEAINEGDESKCGYCLYNNGEEYYNTLGWSFDNRWRNLALIICFWIFNTLMVITFVYITRKPRR.

The span at 1 to 10 shows a compositional bias: basic and acidic residues; that stretch reads MEEYELREIA. Positions 1 to 49 are disordered; sequence MEEYELREIALQEGGSNLDINTPPNYDNPVGDGSSPPDSPDIQKSENQF. Over residues 14–25 the composition is skewed to polar residues; that stretch reads GGSNLDINTPPN. Positions 130-383 constitute an ABC transporter 1 domain; the sequence is ISFFNLFKPS…FIDLGFDCEP (254 aa). The ABC transmembrane type-2 1 domain occupies 488-731; the sequence is WGDKFSLISR…ILSVEGKDYL (244 aa). 5 helical membrane passes run 519–539, 577–597, 602–622, 634–654, and 747–767; these read IPGL…NAFL, IPLT…MFGL, GKFF…TNLF, ISQN…GYTI, and FITY…MEYF. One can recognise an ABC transporter 2 domain in the interval 818 to 1062; that stretch reads FTWQNINYTV…LTSYFERYGV (245 aa). 854–861 provides a ligand contact to ATP; sequence GSSGAGKT. The ABC transmembrane type-2 2 domain occupies 1152–1386; it reads FYTYGSFIQS…PISEPLTGYV (235 aa). A run of 6 helical transmembrane segments spans residues 1155-1175, 1188-1208, 1228-1248, 1266-1286, 1296-1316, and 1423-1443; these read YGSF…FWSL, FIFE…PQFI, FAIS…TIFF, FYFW…GQAV, AHTL…VMVI, and LALI…FVYI.

This sequence belongs to the ABC transporter superfamily. ABCG family. PDR (TC 3.A.1.205) subfamily.

The protein localises to the membrane. The sequence is that of ABC transporter G family member 21 (abcG21) from Dictyostelium discoideum (Social amoeba).